Consider the following 174-residue polypeptide: NADH-ubiquinone oxidoreductase chain 6 (174 aa).

4 helical membrane-spanning segments follow: residues 24 to 44, 48 to 68, 82 to 102, and 143 to 163; these read LAMG…TGLM, FWFS…LFIY, MKLT…NILL, and LMTI…VKIT.

It belongs to the complex I subunit 6 family.

It is found in the mitochondrion membrane. The enzyme catalyses a ubiquinone + NADH + 5 H(+)(in) = a ubiquinol + NAD(+) + 4 H(+)(out). Its function is as follows. Core subunit of the mitochondrial membrane respiratory chain NADH dehydrogenase (Complex I) that is believed to belong to the minimal assembly required for catalysis. Complex I functions in the transfer of electrons from NADH to the respiratory chain. The immediate electron acceptor for the enzyme is believed to be ubiquinone. This is NADH-ubiquinone oxidoreductase chain 6 (ND6) from Ceratitis capitata (Mediterranean fruit fly).